A 508-amino-acid polypeptide reads, in one-letter code: Probable cytochrome P450 6d5 (508 aa).

Residue Cys-453 coordinates heme.

This sequence belongs to the cytochrome P450 family. The cofactor is heme.

The protein resides in the endoplasmic reticulum membrane. It is found in the microsome membrane. In terms of biological role, may be involved in the metabolism of insect hormones and in the breakdown of synthetic insecticides. The chain is Probable cytochrome P450 6d5 (Cyp6d5) from Drosophila melanogaster (Fruit fly).